The primary structure comprises 139 residues: Holo-[acyl-carrier-protein] synthase (139 aa).

Mg(2+) contacts are provided by D8 and E61.

This sequence belongs to the P-Pant transferase superfamily. AcpS family. Mg(2+) serves as cofactor.

It is found in the cytoplasm. It catalyses the reaction apo-[ACP] + CoA = holo-[ACP] + adenosine 3',5'-bisphosphate + H(+). Its function is as follows. Transfers the 4'-phosphopantetheine moiety from coenzyme A to a Ser of acyl-carrier-protein. The chain is Holo-[acyl-carrier-protein] synthase from Bradyrhizobium sp. (strain BTAi1 / ATCC BAA-1182).